The primary structure comprises 70 residues: Small ribosomal subunit protein bS21B (70 aa).

This sequence belongs to the bacterial ribosomal protein bS21 family.

The protein is Small ribosomal subunit protein bS21B of Burkholderia thailandensis (strain ATCC 700388 / DSM 13276 / CCUG 48851 / CIP 106301 / E264).